Here is a 238-residue protein sequence, read N- to C-terminus: Tyrosine recombinase XerD-like (238 aa).

Residues 1–75 enclose the Core-binding (CB) domain; the sequence is MKLPNEIDEY…SANQYLLFLY (75 aa). The 149-residue stretch at 90 to 238 folds into the Tyr recombinase domain; that stretch reads VQKKSQTAQS…TITTLEKYYR (149 aa). Active-site residues include Lys154 and Arg204. Tyr236 acts as the O-(3'-phospho-DNA)-tyrosine intermediate in catalysis.

It belongs to the 'phage' integrase family. XerD-like subfamily.

Its subcellular location is the cytoplasm. In terms of biological role, putative tyrosine recombinase. Not involved in the cutting and rejoining of the recombining DNA molecules on dif(SL) site. This is Tyrosine recombinase XerD-like (ynbA) from Lactococcus lactis subsp. lactis (strain IL1403) (Streptococcus lactis).